We begin with the raw amino-acid sequence, 211 residues long: Pyridoxine/pyridoxamine 5'-phosphate oxidase (211 aa).

Substrate-binding positions include 7-10 (RTDY) and K65. FMN contacts are provided by residues 60–65 (RIVLIK), 75–76 (FT), R81, and K82. Y122, R126, and S130 together coordinate substrate. Residues 139–140 (QS) and W183 contribute to the FMN site. A substrate-binding site is contributed by 189-191 (RLH). Residue R193 coordinates FMN.

Belongs to the pyridoxamine 5'-phosphate oxidase family. Homodimer. FMN is required as a cofactor.

It catalyses the reaction pyridoxamine 5'-phosphate + O2 + H2O = pyridoxal 5'-phosphate + H2O2 + NH4(+). It carries out the reaction pyridoxine 5'-phosphate + O2 = pyridoxal 5'-phosphate + H2O2. It functions in the pathway cofactor metabolism; pyridoxal 5'-phosphate salvage; pyridoxal 5'-phosphate from pyridoxamine 5'-phosphate: step 1/1. The protein operates within cofactor metabolism; pyridoxal 5'-phosphate salvage; pyridoxal 5'-phosphate from pyridoxine 5'-phosphate: step 1/1. Functionally, catalyzes the oxidation of either pyridoxine 5'-phosphate (PNP) or pyridoxamine 5'-phosphate (PMP) into pyridoxal 5'-phosphate (PLP). The protein is Pyridoxine/pyridoxamine 5'-phosphate oxidase of Herminiimonas arsenicoxydans.